Reading from the N-terminus, the 239-residue chain is uncharacterized protein (239 aa).

Residues 129–155 (DSLDDEDDNMISSNDPTKSPEEHDTTT) form a disordered region. Ser160 carries the post-translational modification Phosphoserine.

This is an uncharacterized protein from Schizosaccharomyces pombe (strain 972 / ATCC 24843) (Fission yeast).